The sequence spans 387 residues: Probable serine/threonine-protein kinase PBL18 (387 aa).

Positions 1–37 (MGNCLDSSARVGNRESTFGGSSRISRKPNQSSRLSSL) are disordered. Gly2 is lipidated: N-myristoyl glycine. Cys4 carries the S-palmitoyl cysteine lipid modification. Over residues 14–37 (RESTFGGSSRISRKPNQSSRLSSL) the composition is skewed to polar residues. Thr73 is subject to Phosphothreonine. One can recognise a Protein kinase domain in the interval 84 to 365 (FKPNSMIGEG…ADVLSTLQQL (282 aa)). Residues 90-98 (IGEGGFGCV) and Lys122 each bind ATP. Residue Tyr167 is modified to Phosphotyrosine. Asp215 (proton acceptor) is an active-site residue. A Phosphoserine modification is found at Ser219. Phosphothreonine occurs at positions 250 and 255. Tyr263 is modified (phosphotyrosine). The tract at residues 368-387 (SSKKMGSTQNIVMSPSSHMS) is disordered.

This sequence belongs to the protein kinase superfamily. Ser/Thr protein kinase family.

It localises to the cell membrane. The enzyme catalyses L-seryl-[protein] + ATP = O-phospho-L-seryl-[protein] + ADP + H(+). The catalysed reaction is L-threonyl-[protein] + ATP = O-phospho-L-threonyl-[protein] + ADP + H(+). Its function is as follows. May be involved in plant defense signaling. The protein is Probable serine/threonine-protein kinase PBL18 of Arabidopsis thaliana (Mouse-ear cress).